Consider the following 138-residue polypeptide: ER-derived vesicles protein ERV14 (138 aa).

The Cytoplasmic segment spans residues 2–6 (GAWLF). Residues 7-27 (ILAVVVNCINLFGQVHFTILY) traverse the membrane as a helical segment. The Extracellular portion of the chain corresponds to 28-52 (ADLEADYINPIELCSKVNKLITPEA). Residues 53-73 (ALHGALSLLFLLNGYWFVFLL) traverse the membrane as a helical segment. The Cytoplasmic portion of the chain corresponds to 74-111 (NLPVLAYNLNKIYNKVQLLDATEIFRTLGKHKRESFLK). Residues 112–132 (LGFHLLMFFFYLYRMIMALIA) form a helical membrane-spanning segment. Over 133–138 (ESGDDF) the chain is Extracellular.

This sequence belongs to the cornichon family.

It is found in the endoplasmic reticulum membrane. The protein resides in the golgi apparatus membrane. Its function is as follows. Could regulate export of the bud site and axial growth sites selection protein AXL2 and possibly other secretory proteins from the endoplasmic reticulum in COPII-coated vesicles. Seems to be required for axial budding pattern in haploid cells. The chain is ER-derived vesicles protein ERV14 (ERV14) from Saccharomyces cerevisiae (strain ATCC 204508 / S288c) (Baker's yeast).